We begin with the raw amino-acid sequence, 1892 residues long: Alpha-2-macroglobulin (1892 aa).

The signal sequence occupies residues 1–23; it reads MKNIFRKFVFTIFVCLINLQLIA. The segment at residues 1441–1444 is a cross-link (isoglutamyl cysteine thioester (Cys-Gln)); the sequence is CTEQ.

This sequence belongs to the protease inhibitor I39 (alpha-2-macroglobulin) family. Bacterial alpha-2-macroglobulin subfamily.

Protects the bacterial cell from host peptidases. The polypeptide is Alpha-2-macroglobulin (Rickettsia conorii (strain ATCC VR-613 / Malish 7)).